Consider the following 154-residue polypeptide: Myoglobin (154 aa).

The region spanning 2–148 (GLSDGEWQLV…FRNDMAAKYK (147 aa)) is the Globin domain. Phosphoserine is present on serine 4. Position 65 (histidine 65) interacts with nitrite. Histidine 65 is an O2 binding site. Residue threonine 68 is modified to Phosphothreonine. Residue histidine 94 participates in heme b binding.

This sequence belongs to the globin family. Monomeric.

The protein localises to the cytoplasm. It localises to the sarcoplasm. It catalyses the reaction Fe(III)-heme b-[protein] + nitric oxide + H2O = Fe(II)-heme b-[protein] + nitrite + 2 H(+). The enzyme catalyses H2O2 + AH2 = A + 2 H2O. Monomeric heme protein which primary function is to store oxygen and facilitate its diffusion within muscle tissues. Reversibly binds oxygen through a pentacoordinated heme iron and enables its timely and efficient release as needed during periods of heightened demand. Depending on the oxidative conditions of tissues and cells, and in addition to its ability to bind oxygen, it also has a nitrite reductase activity whereby it regulates the production of bioactive nitric oxide. Under stress conditions, like hypoxia and anoxia, it also protects cells against reactive oxygen species thanks to its pseudoperoxidase activity. The protein is Myoglobin (MB) of Ochotona curzoniae (Black-lipped pika).